A 114-amino-acid polypeptide reads, in one-letter code: uncharacterized protein (114 aa).

2 helical membrane-spanning segments follow: residues 9-29 and 75-95; these read LAIFLFFVAVGFIIFIGSFWL and LVHFFIPVGFGLLFGIAVAII.

It localises to the cell membrane. This is an uncharacterized protein from Mycoplasma pneumoniae (strain ATCC 29342 / M129 / Subtype 1) (Mycoplasmoides pneumoniae).